The chain runs to 507 residues: ATP synthase subunit alpha, chloroplastic (507 aa).

170–177 (GDRQTGKT) is a binding site for ATP.

Belongs to the ATPase alpha/beta chains family. F-type ATPases have 2 components, CF(1) - the catalytic core - and CF(0) - the membrane proton channel. CF(1) has five subunits: alpha(3), beta(3), gamma(1), delta(1), epsilon(1). CF(0) has four main subunits: a, b, b' and c.

The protein localises to the plastid. The protein resides in the chloroplast thylakoid membrane. The enzyme catalyses ATP + H2O + 4 H(+)(in) = ADP + phosphate + 5 H(+)(out). In terms of biological role, produces ATP from ADP in the presence of a proton gradient across the membrane. The alpha chain is a regulatory subunit. The sequence is that of ATP synthase subunit alpha, chloroplastic from Phalaenopsis aphrodite subsp. formosana (Moth orchid).